A 209-amino-acid polypeptide reads, in one-letter code: Uracil phosphoribosyltransferase (209 aa).

5-phospho-alpha-D-ribose 1-diphosphate is bound by residues Arg-79, Arg-104, and 131–139 (DPMLATGAS). Residues Ile-194 and 199–201 (GDA) contribute to the uracil site. Residue Asp-200 participates in 5-phospho-alpha-D-ribose 1-diphosphate binding.

The protein belongs to the UPRTase family. Mg(2+) is required as a cofactor.

The catalysed reaction is UMP + diphosphate = 5-phospho-alpha-D-ribose 1-diphosphate + uracil. It functions in the pathway pyrimidine metabolism; UMP biosynthesis via salvage pathway; UMP from uracil: step 1/1. With respect to regulation, allosterically activated by GTP. In terms of biological role, catalyzes the conversion of uracil and 5-phospho-alpha-D-ribose 1-diphosphate (PRPP) to UMP and diphosphate. The sequence is that of Uracil phosphoribosyltransferase from Staphylococcus aureus (strain JH1).